We begin with the raw amino-acid sequence, 348 residues long: Fructose-1,6-bisphosphatase class 1 (348 aa).

Mg(2+)-binding residues include E104, D126, L128, and D129. Substrate contacts are provided by residues 129–132 (DGSS), N221, Y249, and K279. Mg(2+) is bound at residue E285.

The protein belongs to the FBPase class 1 family. As to quaternary structure, homotetramer. Mg(2+) serves as cofactor.

It is found in the cytoplasm. The enzyme catalyses beta-D-fructose 1,6-bisphosphate + H2O = beta-D-fructose 6-phosphate + phosphate. It functions in the pathway carbohydrate biosynthesis; Calvin cycle. This is Fructose-1,6-bisphosphatase class 1 from Thermosynechococcus vestitus (strain NIES-2133 / IAM M-273 / BP-1).